Here is a 101-residue protein sequence, read N- to C-terminus: Small ribosomal subunit protein bS6 (101 aa).

This sequence belongs to the bacterial ribosomal protein bS6 family.

Its function is as follows. Binds together with bS18 to 16S ribosomal RNA. This Arthrobacter sp. (strain FB24) protein is Small ribosomal subunit protein bS6.